The chain runs to 97 residues: Co-chaperonin GroES (97 aa).

The protein belongs to the GroES chaperonin family. Heptamer of 7 subunits arranged in a ring. Interacts with the chaperonin GroEL.

It is found in the cytoplasm. Together with the chaperonin GroEL, plays an essential role in assisting protein folding. The GroEL-GroES system forms a nano-cage that allows encapsulation of the non-native substrate proteins and provides a physical environment optimized to promote and accelerate protein folding. GroES binds to the apical surface of the GroEL ring, thereby capping the opening of the GroEL channel. This chain is Co-chaperonin GroES, found in Enterobacter sp. (strain 638).